The chain runs to 83 residues: Short neurotoxin NCA-02/NCA-05/UER-05 (83 aa).

The first 21 residues, 1-21, serve as a signal peptide directing secretion; the sequence is MKTLLLTLVVVTMVCLDLGYT. Disulfide bonds link Cys24/Cys45, Cys38/Cys62, Cys64/Cys75, and Cys76/Cys81.

It belongs to the three-finger toxin family. Short-chain subfamily. Type I alpha-neurotoxin sub-subfamily. As to expression, expressed by the venom gland.

Its subcellular location is the secreted. Its function is as follows. Binds to muscle nicotinic acetylcholine receptor (nAChR) and inhibit acetylcholine from binding to the receptor, thereby impairing neuromuscular transmission. This Laticauda colubrina (Yellow-lipped sea krait) protein is Short neurotoxin NCA-02/NCA-05/UER-05.